A 366-amino-acid polypeptide reads, in one-letter code: Ribosomal RNA large subunit methyltransferase M (366 aa).

S-adenosyl-L-methionine-binding positions include Ser188, 221 to 224 (CPGG), Asp240, Asp260, and Asp277. Lys306 acts as the Proton acceptor in catalysis.

Belongs to the class I-like SAM-binding methyltransferase superfamily. RNA methyltransferase RlmE family. RlmM subfamily. As to quaternary structure, monomer.

The protein resides in the cytoplasm. It carries out the reaction cytidine(2498) in 23S rRNA + S-adenosyl-L-methionine = 2'-O-methylcytidine(2498) in 23S rRNA + S-adenosyl-L-homocysteine + H(+). In terms of biological role, catalyzes the 2'-O-methylation at nucleotide C2498 in 23S rRNA. The polypeptide is Ribosomal RNA large subunit methyltransferase M (Escherichia fergusonii (strain ATCC 35469 / DSM 13698 / CCUG 18766 / IAM 14443 / JCM 21226 / LMG 7866 / NBRC 102419 / NCTC 12128 / CDC 0568-73)).